The primary structure comprises 445 residues: Glucose-6-phosphate isomerase (445 aa).

The Proton donor role is filled by Glu-284. Active-site residues include His-305 and Lys-419.

This sequence belongs to the GPI family.

The protein localises to the cytoplasm. It catalyses the reaction alpha-D-glucose 6-phosphate = beta-D-fructose 6-phosphate. The protein operates within carbohydrate biosynthesis; gluconeogenesis. It participates in carbohydrate degradation; glycolysis; D-glyceraldehyde 3-phosphate and glycerone phosphate from D-glucose: step 2/4. Catalyzes the reversible isomerization of glucose-6-phosphate to fructose-6-phosphate. This chain is Glucose-6-phosphate isomerase, found in Leptospira borgpetersenii serovar Hardjo-bovis (strain JB197).